We begin with the raw amino-acid sequence, 190 residues long: Surfactant protein C (190 aa).

Positions 1–24 are excised as a propeptide; that stretch reads MDVGSKEVLMESPPDYTAVPGGRL. 2 S-palmitoyl cysteine lipidation sites follow: C28 and C29. The propeptide occupies 59-190; sequence HMSQKHTEMV…LCGEVPLYYT (132 aa). The BRICHOS domain occupies 94–190; it reads FSIGSTGTVV…LCGEVPLYYT (97 aa). An intrachain disulfide couples C121 to C182.

The protein localises to the secreted. Its subcellular location is the extracellular space. It is found in the surface film. Its function is as follows. Pulmonary surfactant associated proteins promote alveolar stability by lowering the surface tension at the air-liquid interface in the peripheral air spaces. This Bos taurus (Bovine) protein is Surfactant protein C (SFTPC).